The sequence spans 524 residues: Ribonuclease Y (524 aa).

Residues 3-23 (IVINLFLLVPASIVFFAAGFF) traverse the membrane as a helical segment. Positions 96–127 (QQREGQLKKQAQDNRDMERRLQDQRKENEQVQ) are disordered. Over residues 100 to 124 (GQLKKQAQDNRDMERRLQDQRKENE) the composition is skewed to basic and acidic residues. Positions 214 to 280 (ALSVVHIQTD…KLTLQKLLSE (67 aa)) constitute a KH domain. The 93-residue stretch at 340–432 (LLQHSREVAM…VDAANVISLS (93 aa)) folds into the HD domain.

It belongs to the RNase Y family.

It localises to the cell membrane. Functionally, endoribonuclease that initiates mRNA decay. This Chlorobium phaeovibrioides (strain DSM 265 / 1930) (Prosthecochloris vibrioformis (strain DSM 265)) protein is Ribonuclease Y.